Reading from the N-terminus, the 183-residue chain is Ran guanine nucleotide release factor (183 aa).

Residues 23–66 form an interaction with RAN region; the sequence is ELRQIPDNQEVFAHSQTDQSIIIELLEYQSQVQDADAARYHFED.

This sequence belongs to the MOG1 family. Monomer. Interacts with ran.

It is found in the nucleus. The protein localises to the cytoplasm. Its subcellular location is the perinuclear region. It localises to the cell membrane. May regulate the intracellular trafficking of RAN. Promotes guanine nucleotide release from RAN and inhibits binding of new GTP. Plays a role in the regulation of the levels of GTP-bound RAN in the nucleus. Required for normal expression of the ion channel hcn4 and for normal expression of the cardiac transcription factors nkx2.5, gata4 and hand2 during embryonic development. Required for normal embryonic heart development and normal heart rate. This Danio rerio (Zebrafish) protein is Ran guanine nucleotide release factor.